Reading from the N-terminus, the 700-residue chain is Putative ankyrin repeat protein FPV018 (700 aa).

ANK repeat units lie at residues 29–59 (DRLLSLHNILKENNVDRLRELIESDKDVINM), 63–92 (NRLLPLHIAIEHSDIEIVEMLLDNNAVING), 126–155 (RIRRLLTVNNTEKYTKIVKLLIKHGADLKM), 204–233 (MRRITIKCAIRAVNIELVKHFISNNLLADT), 236–265 (ALEDYFLEAVKTNSPKMVKLFLDSGIDINS), 270–299 (NSHTALYHAVEQENVTLVMLLLNHGADPDI), 301–332 (DIYSMLKYAIMSSKHGVKLFNILVKNGARIRC), 395–424 (CNMYPIHAAVSINTSRLTRLLINKGADVNV), 428–457 (YGKTPIHLACMYSKIGNIKVLIKNGANVNE), 461–490 (YGITPLMICSREGKVSNMEYLLANGADVNQ), and 494–523 (DKNTALTYAIRNKSKECTRVLLEHGADMCF).

In Fowlpox virus (strain NVSL) (FPV), this protein is Putative ankyrin repeat protein FPV018.